We begin with the raw amino-acid sequence, 443 residues long: 26S proteasome regulatory subunit 4 homolog B (443 aa).

Disordered stretches follow at residues 1-55 and 87-108; these read MGQG…LPTV and RLKPQEEKAEEDRSKVDDLRGT. Basic and acidic residues-rich tracts occupy residues 12–28 and 87–106; these read QGDRKPDGGEKKEKKFE and RLKPQEEKAEEDRSKVDDLR. 229-236 is an ATP binding site; it reads GEPGTGKT. Glycyl lysine isopeptide (Lys-Gly) (interchain with G-Cter in ubiquitin) cross-links involve residues lysine 296 and lysine 433.

Belongs to the AAA ATPase family. In terms of assembly, component of the 19S regulatory particle (RP/PA700) base subcomplex of the 26S proteasome. The 26S proteasome is composed of a core protease (CP), known as the 20S proteasome, capped at one or both ends by the 19S regulatory particle (RP/PA700). The RP/PA700 complex is composed of at least 17 different subunits in two subcomplexes, the base and the lid, which form the portions proximal and distal to the 20S proteolytic core, respectively. Preferentially expressed in the root and shoot apical meristem.

The protein localises to the cytoplasm. Its subcellular location is the nucleus. Functionally, the 26S protease is involved in the ATP-dependent degradation of ubiquitinated proteins. The regulatory (or ATPase) complex confers ATP dependency and substrate specificity to the 26S complex. Acts redundantly with RPT2A in the regulation of gametogenesis. With RPT2A plays a critical role in 26S proteasome assembly. The chain is 26S proteasome regulatory subunit 4 homolog B from Arabidopsis thaliana (Mouse-ear cress).